We begin with the raw amino-acid sequence, 354 residues long: UDP-N-acetylglucosamine--N-acetylmuramyl-(pentapeptide) pyrophosphoryl-undecaprenol N-acetylglucosamine transferase (354 aa).

UDP-N-acetyl-alpha-D-glucosamine contacts are provided by Ser196 and Gln288.

This sequence belongs to the glycosyltransferase 28 family. MurG subfamily.

It localises to the cell membrane. The catalysed reaction is Mur2Ac(oyl-L-Ala-gamma-D-Glu-L-Lys-D-Ala-D-Ala)-di-trans,octa-cis-undecaprenyl diphosphate + UDP-N-acetyl-alpha-D-glucosamine = beta-D-GlcNAc-(1-&gt;4)-Mur2Ac(oyl-L-Ala-gamma-D-Glu-L-Lys-D-Ala-D-Ala)-di-trans,octa-cis-undecaprenyl diphosphate + UDP + H(+). Its pathway is cell wall biogenesis; peptidoglycan biosynthesis. Its function is as follows. Cell wall formation. Catalyzes the transfer of a GlcNAc subunit on undecaprenyl-pyrophosphoryl-MurNAc-pentapeptide (lipid intermediate I) to form undecaprenyl-pyrophosphoryl-MurNAc-(pentapeptide)GlcNAc (lipid intermediate II). This Streptococcus suis (strain 98HAH33) protein is UDP-N-acetylglucosamine--N-acetylmuramyl-(pentapeptide) pyrophosphoryl-undecaprenol N-acetylglucosamine transferase.